The primary structure comprises 295 residues: Ethanolamine ammonia-lyase small subunit (295 aa).

Val-207, Glu-228, and Cys-258 together coordinate adenosylcob(III)alamin.

Belongs to the EutC family. In terms of assembly, the basic unit is a heterodimer which dimerizes to form tetramers. The heterotetramers trimerize; 6 large subunits form a core ring with 6 small subunits projecting outwards. Adenosylcob(III)alamin is required as a cofactor.

It is found in the bacterial microcompartment. The enzyme catalyses ethanolamine = acetaldehyde + NH4(+). It participates in amine and polyamine degradation; ethanolamine degradation. Its function is as follows. Catalyzes the deamination of various vicinal amino-alcohols to oxo compounds. Allows this organism to utilize ethanolamine as the sole source of nitrogen and carbon in the presence of external vitamin B12. The chain is Ethanolamine ammonia-lyase small subunit from Escherichia fergusonii (strain ATCC 35469 / DSM 13698 / CCUG 18766 / IAM 14443 / JCM 21226 / LMG 7866 / NBRC 102419 / NCTC 12128 / CDC 0568-73).